We begin with the raw amino-acid sequence, 279 residues long: Energy-coupling factor transporter ATP-binding protein EcfA2 (279 aa).

Residues 3-245 (IALENVNFIY…VVFMEEVQLG (243 aa)) form the ABC transporter domain. ATP is bound at residue 40–47 (GHTGSGKS).

Belongs to the ABC transporter superfamily. Energy-coupling factor EcfA family. Forms a stable energy-coupling factor (ECF) transporter complex composed of 2 membrane-embedded substrate-binding proteins (S component), 2 ATP-binding proteins (A component) and 2 transmembrane proteins (T component).

The protein localises to the cell membrane. Its function is as follows. ATP-binding (A) component of a common energy-coupling factor (ECF) ABC-transporter complex. Unlike classic ABC transporters this ECF transporter provides the energy necessary to transport a number of different substrates. The chain is Energy-coupling factor transporter ATP-binding protein EcfA2 from Streptococcus pneumoniae serotype 2 (strain D39 / NCTC 7466).